Consider the following 161-residue polypeptide: MAEINSLSELSMATSITEPHENVVPVHVQKLDSQGRAYATGKRKDAVARVWIKPGSGKIIINNKEFDKYFARPVLRMILRQPIVATNRDTQFDIVATVAGGGLSGQAGAIRHGISKALTYYEPELRPILKKGGFLTRDSRVVERKKYGKAKARRSFQFSKR.

The protein belongs to the universal ribosomal protein uS9 family.

This Bartonella tribocorum (strain CIP 105476 / IBS 506) protein is Small ribosomal subunit protein uS9.